We begin with the raw amino-acid sequence, 142 residues long: Regulatory protein RecX (142 aa).

This sequence belongs to the RecX family.

Its subcellular location is the cytoplasm. Functionally, modulates RecA activity. In Thermus thermophilus (strain ATCC BAA-163 / DSM 7039 / HB27), this protein is Regulatory protein RecX.